The chain runs to 1035 residues: MSSKTEIPIITDEGDFSAEYETFCQAMNGVADGTFICVSVFGPQSSGKSTLLNDLFGTSFKTMDLSAGRTQTTKGIMARAVDFQTKVAPRVLILDCEGSDSRERNQQEAQNIERHIGCFAAAVSDLLIINVWNHDIGRHSAANYNILSTIFDIYFRSLLKARRKSGNHRPLILLIAIRDAEEDGAELTQRTFESDVHHIYEQSVPKQYHGSFRDYFCLRFWFIPHRRYMKSLYDEKITQLKTDIKEIFDSLLGAETATTLIPLTDSSIYYNNIWDIVRTDKDLDIPSQREIVSNIRCEEFYLEAIEQFSSQVGKVFADVTAAIQVSLGQQSSTFLEQSPDAVKDYPITKLHNACNSFKLTKVLMDLSQECVALYRRKTRHYIPKVVTQWATKLNDDVLAGLKKVAHSFAKGIRESTCQALGAVTAPFRVQITQWLERHEYSDDYASNTNTVDILVPDLISDLTFPQKRLTDLMGLLGAATRVFHKCISVNWAHEYSGLCDTGILVNLPPNDVGPNSNVRIGDNAIETNAGSSVRLSVGYEASEPMVDAHIDDSGAFFSDIRQTGVYSPHLYAFLESLSLSTYGKALSLQKLPAAPPDVANAYDAVCLLHTIILLWYCETMMPLSLIYDITPEIDHVIPESNALFCETMGSILAAVAEAVSSQTRTITASMTQATARLMDDKLYVTLGSLRGVIYESARKTLERSFFSLLSSAFVAPDHQGLLYLQTRLSSPSIYFDLHFDSSSRSSPTDSILPDTQNPVYKQYTDIYLFSTLPALLSPLPRAYNTVGTRLSSGSSSIQSLLPRYRAVPIVAALDMSAFYIPQAALSSFMDRVDAEIIELINKSLGEFFSKSFPLVLQNKIHTKLVYDDQGAQRSYISENSILTEFLSEKKGLISMAQLFEGGTLITENLHSVTIKPTSQEKIDAMLRCAEAEWDKTYQEALEIYRTNKHKDKYKWVWLGLCVFLMLTRKWVYAVLLSKYCLCITILLLSVGLFVYQRTTPDERNASFSIVATSIRERDVGQFWDATKRLAQKVIH.

Positions 32 to 267 constitute a GB1/RHD3-type G domain; that stretch reads DGTFICVSVF…TTLIPLTDSS (236 aa). 42–49 is a GTP binding site; that stretch reads GPQSSGKS.

This sequence belongs to the TRAFAC class dynamin-like GTPase superfamily. GB1/RHD3 GTPase family. RHD3 subfamily.

Its subcellular location is the endoplasmic reticulum membrane. Its function is as follows. Probable GTP-binding protein that may be involved in cell development. The polypeptide is Protein SEY1 homolog (Giardia intestinalis (strain ATCC 50803 / WB clone C6) (Giardia lamblia)).